The following is a 32-amino-acid chain: Photosystem II reaction center protein Z (32 aa).

The chain crosses the membrane as a helical span at residues 9 to 31 (FILLGAVTWAILVFIVGSLNSYV).

Belongs to the PsbZ family. PSII is composed of 1 copy each of membrane proteins PsbA, PsbB, PsbC, PsbD, PsbE, PsbF, PsbH, PsbI, PsbJ, PsbK, PsbL, PsbM, PsbT, PsbY, PsbZ, Psb30/Ycf12, at least 3 peripheral proteins of the oxygen-evolving complex and a large number of cofactors. It forms dimeric complexes.

Its subcellular location is the plastid. The protein resides in the chloroplast thylakoid membrane. May control the interaction of photosystem II (PSII) cores with the light-harvesting antenna, regulates electron flow through the 2 photosystem reaction centers. PSII is a light-driven water plastoquinone oxidoreductase, using light energy to abstract electrons from H(2)O, generating a proton gradient subsequently used for ATP formation. The chain is Photosystem II reaction center protein Z from Euglena stellata.